The chain runs to 518 residues: Retinal dehydrogenase 2 (518 aa).

Tyr-168 carries the post-translational modification Phosphotyrosine. Residues 184 to 186, 210 to 213, and 264 to 266 each bind NAD(+); these read IPW, KPAE, and STE. Glu-286 serves as the catalytic Proton acceptor. Residue Cys-320 is the Nucleophile of the active site. Ser-351 bears the Phosphoserine mark. NAD(+) is bound by residues 366–370 and Glu-417; that span reads KQYNK.

It belongs to the aldehyde dehydrogenase family. In terms of assembly, homotetramer. In terms of tissue distribution, found in testis and less abundantly in lung, brain, heart, liver and kidney.

The protein resides in the cytoplasm. The catalysed reaction is retinal + NAD(+) + H2O = retinoate + NADH + 2 H(+). The enzyme catalyses all-trans-retinal + NAD(+) + H2O = all-trans-retinoate + NADH + 2 H(+). It carries out the reaction all-trans-13,14-dihydroretinal + NAD(+) + H2O = all-trans-13,14-dihydroretinoate + NADH + 2 H(+). It participates in cofactor metabolism; retinol metabolism. Catalyzes the NAD-dependent oxidation of aldehyde substrates, such as all-trans-retinal and all-trans-13,14-dihydroretinal, to their corresponding carboxylic acids, all-trans-retinoate and all-trans-13,14-dihydroretinoate, respectively. Retinoate signaling is critical for the transcriptional control of many genes, for instance it is crucial for initiation of meiosis in both male and female. Recognizes retinal as substrate, both in its free form and when bound to cellular retinol-binding protein. Lacks activity with benzaldehyde, acetaldehyde and octanal. Displays complete lack of activity with citral. The chain is Retinal dehydrogenase 2 (Aldh1a2) from Rattus norvegicus (Rat).